A 140-amino-acid polypeptide reads, in one-letter code: Large-conductance mechanosensitive channel (140 aa).

Transmembrane regions (helical) follow at residues 14 to 34 (VLDLAVGVIIGGAFTSIVKSL), 37 to 57 (YLINPLIGLFIGGIDFSDWVL), and 66 to 86 (FGSFINAVINFLIIAFVVFIL).

The protein belongs to the MscL family. In terms of assembly, homopentamer.

The protein resides in the cell membrane. Its function is as follows. Channel that opens in response to stretch forces in the membrane lipid bilayer. May participate in the regulation of osmotic pressure changes within the cell. This is Large-conductance mechanosensitive channel from Pediococcus pentosaceus (strain ATCC 25745 / CCUG 21536 / LMG 10740 / 183-1w).